The following is an 85-amino-acid chain: U5-theraphotoxin-Hhn1a (85 aa).

The first 21 residues, 1–21, serve as a signal peptide directing secretion; that stretch reads MKSQIFFAVAALFLLTVRTYA. Positions 22 to 49 are excised as a propeptide; the sequence is SKSKEQDLRDALFSAMFSADNQLNPQER. Intrachain disulfides connect cysteine 51/cysteine 65, cysteine 58/cysteine 70, and cysteine 64/cysteine 77.

It belongs to the neurotoxin 10 (Hwtx-1) family. 18 (Hntx-VII) subfamily. As to expression, expressed by the venom gland.

Its subcellular location is the secreted. Functionally, ion channel impairing toxin that inhibits voltage-gated sodium channels. The recombinantly expressed toxin shows a weak activity against Nav1.7/SCN9A, and shifts the voltage dependence of channel activation to more depolarized potentials. This is U5-theraphotoxin-Hhn1a from Cyriopagopus hainanus (Chinese bird spider).